Reading from the N-terminus, the 61-residue chain is Large ribosomal subunit protein bL32 (61 aa).

The segment covering 1–16 (MAVPKRKTSPSKRGMR) has biased composition (basic residues). The disordered stretch occupies residues 1–39 (MAVPKRKTSPSKRGMRRSADALKAPTYIEDKNSGELRRP). Basic and acidic residues predominate over residues 28-39 (IEDKNSGELRRP).

Belongs to the bacterial ribosomal protein bL32 family.

The chain is Large ribosomal subunit protein bL32 from Rhizobium meliloti (strain 1021) (Ensifer meliloti).